The primary structure comprises 495 residues: Two-component response regulator-like APRR3 (495 aa).

The region spanning 65 to 183 (KVLLVENDDS…ELKNLWQHVW (119 aa)) is the Response regulatory domain. 2 disordered regions span residues 188-441 (SSSG…RWAQ) and 465-495 (HSRK…SEDN). The span at 206-217 (PESTQGSENDAS) shows a compositional bias: polar residues. The span at 231–248 (GLSNQDGGSDNGSGTQSS) shows a compositional bias: low complexity. The span at 256–265 (TKSTSPSNQF) shows a compositional bias: polar residues. The segment covering 284–293 (RLKEAEDQKE) has biased composition (basic and acidic residues). A compositionally biased stretch (polar residues) spans 294–304 (QIGTGSQTGMS). The span at 307–319 (KKAEEPGDLEKNA) shows a compositional bias: basic and acidic residues. Polar residues predominate over residues 335-350 (NRSSGNSQVESKAPSS). Residues 349 to 372 (SSNREDLQSLEQTLKKTREDRDYK) are a coiled coil. Basic and acidic residues predominate over residues 351–378 (NREDLQSLEQTLKKTREDRDYKVGDRSV). Composition is skewed to polar residues over residues 380–395 (RHSN…NGAT) and 420–436 (GSSS…SSGS). The CCT domain occupies 442–484 (REAALMKFRLKRKERCFEKKVRYHSRKKLAEQRPHVKGQFIRK). Basic and acidic residues predominate over residues 483–495 (RKRDDHKSGSEDN).

This sequence belongs to the ARR-like family. Interacts with APRR1/TOC1 (via N-terminus). In terms of processing, phosphorylated by WNK1; during the night. Phosphorylation is required for optimal interaction with APRR1/TOC1.

Its subcellular location is the nucleus. Its function is as follows. Controls photoperiodic flowering response. Component of the circadian clock. Controls the degradation of APRR1/TOC1 by the SCF(ZTL) complex. Expression of several members of the ARR-like family is controlled by circadian rhythm. The particular coordinated sequential expression of APRR9, APRR7, APRR5, APRR3 and APPR1 result to circadian waves that may be at the basis of the endogenous circadian clock. The protein is Two-component response regulator-like APRR3 (APRR3) of Arabidopsis thaliana (Mouse-ear cress).